The chain runs to 361 residues: Phosphoserine aminotransferase (361 aa).

L-glutamate is bound at residue R43. Pyridoxal 5'-phosphate contacts are provided by residues 77–78, W103, T153, D173, and Q196; that span reads AS. K197 is subject to N6-(pyridoxal phosphate)lysine. Pyridoxal 5'-phosphate is bound at residue 238–239; sequence NT.

The protein belongs to the class-V pyridoxal-phosphate-dependent aminotransferase family. SerC subfamily. In terms of assembly, homodimer. The cofactor is pyridoxal 5'-phosphate.

Its subcellular location is the cytoplasm. It carries out the reaction O-phospho-L-serine + 2-oxoglutarate = 3-phosphooxypyruvate + L-glutamate. The catalysed reaction is 4-(phosphooxy)-L-threonine + 2-oxoglutarate = (R)-3-hydroxy-2-oxo-4-phosphooxybutanoate + L-glutamate. The protein operates within amino-acid biosynthesis; L-serine biosynthesis; L-serine from 3-phospho-D-glycerate: step 2/3. Its pathway is cofactor biosynthesis; pyridoxine 5'-phosphate biosynthesis; pyridoxine 5'-phosphate from D-erythrose 4-phosphate: step 3/5. In terms of biological role, catalyzes the reversible conversion of 3-phosphohydroxypyruvate to phosphoserine and of 3-hydroxy-2-oxo-4-phosphonooxybutanoate to phosphohydroxythreonine. In Pseudomonas aeruginosa (strain ATCC 15692 / DSM 22644 / CIP 104116 / JCM 14847 / LMG 12228 / 1C / PRS 101 / PAO1), this protein is Phosphoserine aminotransferase.